The following is a 511-amino-acid chain: Glucans biosynthesis protein G (511 aa).

A signal peptide spans 1–22 (MMKMRWLSAAVMLTLYTSSSWA).

Belongs to the OpgD/OpgG family.

Its subcellular location is the periplasm. The protein operates within glycan metabolism; osmoregulated periplasmic glucan (OPG) biosynthesis. Its function is as follows. Involved in the biosynthesis of osmoregulated periplasmic glucans (OPGs). This is Glucans biosynthesis protein G from Shigella boydii serotype 4 (strain Sb227).